A 1025-amino-acid polypeptide reads, in one-letter code: Multidrug resistance protein MdtC (1025 aa).

12 consecutive transmembrane segments (helical) span residues 3–23 (FFALFIYRPVATILLSVAITL), 333–353 (EVEQTLIISVALVILVVFLFL), 360–380 (IIPAVVVPVSLIGTFAAMYLC), 387–407 (LSLMALTIATGFVVDDAIVVL), 431–451 (VGFTVLSMSLSLVAVFLPLLL), 463–483 (FAVTLSVAIGISLLVSLTLTP), 528–548 (LVGVVLLGTIALNIWLYISIP), 853–873 (VILIIAAIATVYIVLGILYES), 875–895 (VHPLTILSTLPSAGVGALLAL), 897–917 (LFNAPFSLIALIGIMLLIGIV), 953–973 (PIMMTTLAALFGALPLVLSGG), and 984–1004 (ITIVGGLVMSQLLTLYTTPVV).

The protein belongs to the resistance-nodulation-cell division (RND) (TC 2.A.6) family. MdtC subfamily. As to quaternary structure, part of a tripartite efflux system composed of MdtA, MdtB and MdtC. MdtC forms a heteromultimer with MdtB.

It is found in the cell inner membrane. Functionally, the MdtABC tripartite complex confers resistance against novobiocin and deoxycholate. The chain is Multidrug resistance protein MdtC from Escherichia coli O8 (strain IAI1).